The chain runs to 333 residues: Regulator of rDNA transcription protein 5 (333 aa).

The segment at M1 to E22 is disordered. The RRM 1 domain occupies T31 to P114. Disordered regions lie at residues P123–Y185 and G281–A333. Residues P125–K137 show a composition bias toward basic residues. 2 stretches are compositionally biased toward polar residues: residues N145–G160 and A169–D182. Residues D182 to I267 form the RRM 2 domain. Residues G298–V308 are compositionally biased toward gly residues. Over residues S313–P327 the composition is skewed to polar residues.

Belongs to the RRT5 family.

May be involved in the modulation of rDNA transcription. The protein is Regulator of rDNA transcription protein 5 (RRT5) of Vanderwaltozyma polyspora (strain ATCC 22028 / DSM 70294 / BCRC 21397 / CBS 2163 / NBRC 10782 / NRRL Y-8283 / UCD 57-17) (Kluyveromyces polysporus).